The following is a 212-amino-acid chain: Cyclin-P4-1 (212 aa).

This sequence belongs to the cyclin family. Cyclin U/P subfamily.

The protein is Cyclin-P4-1 (CYCP4-1) of Oryza sativa subsp. japonica (Rice).